Consider the following 417-residue polypeptide: NADH-quinone oxidoreductase subunit D (417 aa).

This sequence belongs to the complex I 49 kDa subunit family. In terms of assembly, NDH-1 is composed of 14 different subunits. Subunits NuoB, C, D, E, F, and G constitute the peripheral sector of the complex.

It localises to the cell inner membrane. The enzyme catalyses a quinone + NADH + 5 H(+)(in) = a quinol + NAD(+) + 4 H(+)(out). Functionally, NDH-1 shuttles electrons from NADH, via FMN and iron-sulfur (Fe-S) centers, to quinones in the respiratory chain. The immediate electron acceptor for the enzyme in this species is believed to be ubiquinone. Couples the redox reaction to proton translocation (for every two electrons transferred, four hydrogen ions are translocated across the cytoplasmic membrane), and thus conserves the redox energy in a proton gradient. The polypeptide is NADH-quinone oxidoreductase subunit D (Polaromonas sp. (strain JS666 / ATCC BAA-500)).